A 406-amino-acid chain; its full sequence is Cysteine desulfurase (406 aa).

An N6-(pyridoxal phosphate)lysine modification is found at K226. C364 (cysteine persulfide intermediate) is an active-site residue.

The protein belongs to the class-V pyridoxal-phosphate-dependent aminotransferase family. Csd subfamily. As to quaternary structure, homodimer. Interacts with SufE and the SufBCD complex composed of SufB, SufC and SufD. The interaction with SufE is required to mediate the direct transfer of the sulfur atom from the S-sulfanylcysteine. The cofactor is pyridoxal 5'-phosphate.

The protein resides in the cytoplasm. The catalysed reaction is (sulfur carrier)-H + L-cysteine = (sulfur carrier)-SH + L-alanine. It catalyses the reaction L-selenocysteine + AH2 = hydrogenselenide + L-alanine + A + H(+). The protein operates within cofactor biosynthesis; iron-sulfur cluster biosynthesis. Cysteine desulfurases mobilize the sulfur from L-cysteine to yield L-alanine, an essential step in sulfur metabolism for biosynthesis of a variety of sulfur-containing biomolecules. Component of the suf operon, which is activated and required under specific conditions such as oxidative stress and iron limitation. Acts as a potent selenocysteine lyase in vitro, that mobilizes selenium from L-selenocysteine. Selenocysteine lyase activity is however unsure in vivo. In Yersinia pestis bv. Antiqua (strain Angola), this protein is Cysteine desulfurase.